A 267-amino-acid polypeptide reads, in one-letter code: tRNA pseudouridine synthase A (267 aa).

Residue aspartate 52 is the Nucleophile of the active site. Tyrosine 110 contacts substrate.

This sequence belongs to the tRNA pseudouridine synthase TruA family. As to quaternary structure, homodimer.

The catalysed reaction is uridine(38/39/40) in tRNA = pseudouridine(38/39/40) in tRNA. Formation of pseudouridine at positions 38, 39 and 40 in the anticodon stem and loop of transfer RNAs. The sequence is that of tRNA pseudouridine synthase A from Paraburkholderia phymatum (strain DSM 17167 / CIP 108236 / LMG 21445 / STM815) (Burkholderia phymatum).